The primary structure comprises 271 residues: MKPQKIIYKIEEFPAIHYLHNALTKNYDVIFKYSENIINNKKVSQIKRIPGQWTGQKADDFVNGLDDTWIYGWTDQNTWFNYLMIYNNHIINNGDDMDNQIINDIFIPIKSIINICGLSLLMPEATIKPHIDENTTISKNRLAYHFNVFGNGSIININGILLKQKPKKSLVFDSGFIHSVTNGNEYRLLIYIDFNVLLSKNFIYGRITDLSNDKIIIKSYYKHDNGIYNINHYNYGQGLATVSQYTVSLMFNNQRSDILKNDSILIEIISS.

This is an uncharacterized protein from Acanthamoeba polyphaga mimivirus (APMV).